A 308-amino-acid polypeptide reads, in one-letter code: Ribosomal RNA small subunit methyltransferase H (308 aa).

S-adenosyl-L-methionine-binding positions include 35 to 37, Asp-55, Phe-79, Asp-100, and Gln-107; that span reads GGH.

This sequence belongs to the methyltransferase superfamily. RsmH family.

The protein resides in the cytoplasm. The enzyme catalyses cytidine(1402) in 16S rRNA + S-adenosyl-L-methionine = N(4)-methylcytidine(1402) in 16S rRNA + S-adenosyl-L-homocysteine + H(+). Its function is as follows. Specifically methylates the N4 position of cytidine in position 1402 (C1402) of 16S rRNA. The sequence is that of Ribosomal RNA small subunit methyltransferase H from Dechloromonas aromatica (strain RCB).